The chain runs to 205 residues: Probable GTP-binding protein EngB (205 aa).

The EngB-type G domain maps to 22–195 (NLPEVALVGR…LDLLDYFWNG (174 aa)). GTP contacts are provided by residues 30–37 (GRSNVGKS), 57–61 (GKTQT), 75–78 (DLPG), 142–145 (TKAD), and 174–176 (FSA). Residues Ser37 and Thr59 each coordinate Mg(2+).

Belongs to the TRAFAC class TrmE-Era-EngA-EngB-Septin-like GTPase superfamily. EngB GTPase family. Mg(2+) is required as a cofactor.

Functionally, necessary for normal cell division and for the maintenance of normal septation. In Heliobacterium modesticaldum (strain ATCC 51547 / Ice1), this protein is Probable GTP-binding protein EngB.